Consider the following 241-residue polypeptide: 1-(5-phosphoribosyl)-5-[(5-phosphoribosylamino)methylideneamino] imidazole-4-carboxamide isomerase (241 aa).

Catalysis depends on aspartate 8, which acts as the Proton acceptor. Aspartate 130 acts as the Proton donor in catalysis.

It belongs to the HisA/HisF family.

Its subcellular location is the cytoplasm. The enzyme catalyses 1-(5-phospho-beta-D-ribosyl)-5-[(5-phospho-beta-D-ribosylamino)methylideneamino]imidazole-4-carboxamide = 5-[(5-phospho-1-deoxy-D-ribulos-1-ylimino)methylamino]-1-(5-phospho-beta-D-ribosyl)imidazole-4-carboxamide. The protein operates within amino-acid biosynthesis; L-histidine biosynthesis; L-histidine from 5-phospho-alpha-D-ribose 1-diphosphate: step 4/9. In Leptospira borgpetersenii serovar Hardjo-bovis (strain JB197), this protein is 1-(5-phosphoribosyl)-5-[(5-phosphoribosylamino)methylideneamino] imidazole-4-carboxamide isomerase.